A 420-amino-acid polypeptide reads, in one-letter code: MSYQKVELAISKLIHLYPSPVQFLVAFSGGLDSTVMLDALCKHVSPQSIHAVYINHGLQPESNQWADACKKACERLGVKFESVDVQVSDISRQGIEAVARQKRYEALYSRVTKGTILLTAHHQRDQAETLLLNMARGAGISGLSGMPYVKNIQLNEQTLQHCRPLLNVDYDAIQSYAKQYRLDWVEDSSNQELDYRRNYLRHEVLPKIRHAWPFSDANFAKSAHHLNESLALLNELAEIDLQHTDYTDFYLSFTNVKELRWSRLKNMTRYWTESYVSGLRLNAKIYQWLQECLNNKNPQAKPKMLLARGELRFYNHVLYYFDDLKVHYCLAFDEFDASALQLFKALDFSEQLSSKQGGKLEGTVVRPLNPNDLSSGSQKKALKKWFKESKVPEWDRQRWPVLEKEGQVVAILGFYTKKSF.

28 to 33 contacts ATP; the sequence is SGGLDS.

The protein belongs to the tRNA(Ile)-lysidine synthase family.

The protein resides in the cytoplasm. It catalyses the reaction cytidine(34) in tRNA(Ile2) + L-lysine + ATP = lysidine(34) in tRNA(Ile2) + AMP + diphosphate + H(+). Ligates lysine onto the cytidine present at position 34 of the AUA codon-specific tRNA(Ile) that contains the anticodon CAU, in an ATP-dependent manner. Cytidine is converted to lysidine, thus changing the amino acid specificity of the tRNA from methionine to isoleucine. The chain is tRNA(Ile)-lysidine synthase from Hydrogenovibrio crunogenus (strain DSM 25203 / XCL-2) (Thiomicrospira crunogena).